Consider the following 168-residue polypeptide: G/U mismatch-specific DNA glycosylase (168 aa).

It belongs to the uracil-DNA glycosylase (UDG) superfamily. TDG/mug family. Binds DNA as a monomer.

Its subcellular location is the cytoplasm. The catalysed reaction is Specifically hydrolyzes mismatched double-stranded DNA and polynucleotides, releasing free uracil.. Excises ethenocytosine and uracil, which can arise by alkylation or deamination of cytosine, respectively, from the corresponding mispairs with guanine in ds-DNA. It is capable of hydrolyzing the carbon-nitrogen bond between the sugar-phosphate backbone of the DNA and the mispaired base. The complementary strand guanine functions in substrate recognition. Required for DNA damage lesion repair in stationary-phase cells. This Shigella dysenteriae serotype 1 (strain Sd197) protein is G/U mismatch-specific DNA glycosylase.